A 132-amino-acid polypeptide reads, in one-letter code: Agouti-related protein (132 aa).

The N-terminal stretch at 1 to 20 (MLTAAVLSCALLLALPATRG) is a signal peptide. Positions 21 to 82 (AQMGLAPMEG…VLDLQDREPR (62 aa)) are excised as a propeptide. 5 disulfide bridges follow: Cys87-Cys102, Cys94-Cys108, Cys101-Cys119, Cys105-Cys129, and Cys110-Cys117. An Agouti domain is found at 87–129 (CVRLHESCLGQQVPCCDPCATCYCRFFNAFCYCRKLGTAMNPC). An interaction with melanocortin receptors region spans residues 111–113 (RFF).

As to quaternary structure, interacts with melanocortin receptors MC3R, MC4R and MC5R. Expressed primarily in the adrenal gland, subthalamic nucleus, and hypothalamus, with a lower level of expression occurring in testis, lung, and kidney.

It localises to the secreted. Its subcellular location is the golgi apparatus lumen. Plays a role in weight homeostasis. Involved in the control of feeding behavior through the central melanocortin system. Acts as alpha melanocyte-stimulating hormone antagonist by inhibiting cAMP production mediated by stimulation of melanocortin receptors within the hypothalamus and adrenal gland. Has very low activity with MC5R. Is an inverse agonist for MC3R and MC4R being able to suppress their constitutive activity. It promotes MC3R and MC4R endocytosis in an arrestin-dependent manner. This Homo sapiens (Human) protein is Agouti-related protein (AGRP).